A 935-amino-acid chain; its full sequence is Coiled-coil domain-containing protein 66 (935 aa).

Residues 76-96 (LDTSQAKPENSRLTFSPSTDK) show a composition bias toward polar residues. The disordered stretch occupies residues 76 to 103 (LDTSQAKPENSRLTFSPSTDKQYSEKDS). Thr-114 is modified (phosphothreonine). Ser-366 carries the phosphoserine modification. A coiled-coil region spans residues 462–555 (LEHQKAIMAQ…EQRIRELAQK (94 aa)). Disordered regions lie at residues 470–491 (AQVE…KEEQ), 577–602 (TISS…DTGV), and 738–794 (ENLS…RTQQ). Over residues 473–491 (EENRRKKRLEEEQRKKEEQ) the composition is skewed to basic and acidic residues. A mediates localization to cilia, centrosomes and spindle microtubules and the interaction with PCM1, CEP290, CEP104 and CSPP1 region spans residues 567-935 (GAQVDYKAFT…NQEDNFSSSF (369 aa)). The segment covering 590–602 (DTSTASPKKDTGV) has biased composition (polar residues). Ser-595 carries the phosphoserine modification. Residues 752–782 (SHRETESESRLHLIKKVEEPLKTPSVSKERF) are compositionally biased toward basic and acidic residues. A compositionally biased stretch (polar residues) spans 783 to 794 (QTSPAVKNRTQQ).

In terms of assembly, homodimer; disulfide-linked. Interacts with CEP290. Interacts with PCM1. Interacts with ARMC9, TOGARAM1, CSPP1 and CEP104. Interacts with CDK5RAP2, CEP152, CEP192, TBG1 and PRC1. In terms of tissue distribution, widely expressed. Expressed in retina by rod photoreceptors but also detected in outer plexiform and ganglion cell layers (at protein level).

The protein localises to the cytoplasm. Its subcellular location is the cytoskeleton. The protein resides in the microtubule organizing center. It is found in the centrosome. It localises to the centriolar satellite. The protein localises to the cell projection. Its subcellular location is the cilium. The protein resides in the cilium basal body. It is found in the cilium axoneme. It localises to the photoreceptor inner segment. The protein localises to the photoreceptor outer segment. Functionally, microtubule-binding protein required for ciliogenesis. May function in ciliogenesis by mediating the transport of proteins like BBS4 to the cilium, but also through the organization of the centriolar satellites. Required for the assembly of signaling-competent cilia with proper structure and length. Mediates this function in part by regulating transition zone assembly and basal body recruitment of the IFT-B complex. Cooperates with the ciliopathy proteins CSPP1 and CEP104 during cilium length regulation. Plays two important roles during cell division. First, is required for mitotic progression via regulation of spindle assembly, organization and orientation, levels of spindle microtubules (MTs), kinetochore-fiber integrity, and chromosome alignment. Second, functions during cytokinesis in part by regulating assembly and organization of central spindle and midbody MTs. Plays a role in retina morphogenesis and/or homeostasis. The protein is Coiled-coil domain-containing protein 66 of Mus musculus (Mouse).